A 220-amino-acid polypeptide reads, in one-letter code: Iron-sulfur cluster repair protein YtfE (220 aa).

Belongs to the RIC family. YtfE subfamily. As to quaternary structure, homodimer.

Its subcellular location is the cytoplasm. Functionally, di-iron-containing protein involved in the repair of iron-sulfur clusters damaged by oxidative and nitrosative stress conditions. In Escherichia coli O6:K15:H31 (strain 536 / UPEC), this protein is Iron-sulfur cluster repair protein YtfE.